The chain runs to 177 residues: uncharacterized protein (177 aa).

The protein belongs to the flavoredoxin family. Requires FMN as cofactor.

This is an uncharacterized protein from Archaeoglobus fulgidus (strain ATCC 49558 / DSM 4304 / JCM 9628 / NBRC 100126 / VC-16).